The chain runs to 783 residues: Polyribonucleotide nucleotidyltransferase 1, mitochondrial (783 aa).

A mitochondrion-targeting transit peptide spans Met-1–Arg-45. N6-acetyllysine occurs at positions 250, 264, 285, and 289. Lys-552 bears the N6-succinyllysine mark. The 60-residue stretch at Pro-605–Ile-664 folds into the KH domain. One can recognise an S1 motif domain in the interval Gly-679–Lys-750. Phosphoserine occurs at positions 754 and 782.

This sequence belongs to the polyribonucleotide nucleotidyltransferase family. Homotrimer; in free form. Homooligomer. Component of the mitochondrial degradosome (mtEXO) complex which is a heteropentamer containing 2 copies of SUPV3L1 and 3 copies of PNPT1. As part of the mitochondrial degradosome complex, interacts with GRSF1 in an RNA-dependent manner; the interaction enhances the activity of the complex. Interacts with TCL1A; the interaction has no effect on PNPT1 exonuclease activity.

It localises to the cytoplasm. It is found in the mitochondrion matrix. The protein resides in the mitochondrion intermembrane space. It catalyses the reaction RNA(n+1) + phosphate = RNA(n) + a ribonucleoside 5'-diphosphate. In terms of biological role, RNA-binding protein implicated in numerous RNA metabolic processes. Catalyzes the phosphorolysis of single-stranded polyribonucleotides processively in the 3'-to-5' direction. Mitochondrial intermembrane factor with RNA-processing exoribonulease activity. Component of the mitochondrial degradosome (mtEXO) complex, that degrades 3' overhang double-stranded RNA with a 3'-to-5' directionality in an ATP-dependent manner. Involved in the degradation of non-coding mitochondrial transcripts (MT-ncRNA) and tRNA-like molecules. Required for correct processing and polyadenylation of mitochondrial mRNAs. Plays a role as a cytoplasmic RNA import factor that mediates the translocation of small RNA components, like the 5S RNA, the RNA subunit of ribonuclease P and the mitochondrial RNA-processing (MRP) RNA, into the mitochondrial matrix. Plays a role in mitochondrial morphogenesis and respiration; regulates the expression of the electron transport chain (ETC) components at the mRNA and protein levels. In the cytoplasm, shows a 3'-to-5' exoribonuclease mediating mRNA degradation activity; degrades c-myc mRNA upon treatment with IFNB1/IFN-beta, resulting in a growth arrest in melanoma cells. Regulates the stability of specific mature miRNAs in melanoma cells; specifically and selectively degrades miR-221, preferentially. Also plays a role in RNA cell surveillance by cleaning up oxidized RNAs. Binds to the RNA subunit of ribonuclease P, MRP RNA and miR-221 microRNA. In Homo sapiens (Human), this protein is Polyribonucleotide nucleotidyltransferase 1, mitochondrial.